The following is a 364-amino-acid chain: Medium-wave-sensitive opsin 1 (364 aa).

Residues Met-1–Val-52 lie on the Extracellular side of the membrane. The interval Asp-17–Pro-43 is required for 11-cis-retinal regeneration. N-linked (GlcNAc...) asparagine glycosylation is present at Asn-34. A helical membrane pass occupies residues Tyr-53 to Ala-77. The Cytoplasmic segment spans residues Thr-78 to Asn-89. A helical transmembrane segment spans residues Trp-90–Val-115. Over Tyr-116–Glu-129 the chain is Extracellular. A disulfide bridge connects residues Cys-126 and Cys-203. The chain crosses the membrane as a helical span at residues Gly-130 to Trp-149. Over Glu-150–Leu-168 the chain is Cytoplasmic. Residues Ala-169 to Ser-192 form a helical membrane-spanning segment. Residues Arg-193–Ser-218 lie on the Extracellular side of the membrane. The chain crosses the membrane as a helical span at residues Tyr-219–Ile-246. Over Arg-247–Arg-268 the chain is Cytoplasmic. A helical transmembrane segment spans residues Met-269–Thr-292. The Extracellular segment spans residues Ala-293–His-300. A helical membrane pass occupies residues Pro-301–Met-325. Residue Lys-312 is modified to N6-(retinylidene)lysine. At Asn-326 to Ala-364 the chain is on the cytoplasmic side.

This sequence belongs to the G-protein coupled receptor 1 family. Opsin subfamily. Monomer. Homodimer. Homotetramer. Post-translationally, O-glycosylated. In terms of processing, phosphorylated on some or all of the serine and threonine residues present in the C-terminal region. In terms of tissue distribution, expressed in cone photoreceptor cells.

The protein localises to the membrane. Functionally, visual pigments are the light-absorbing molecules that mediate vision. They consist of an apoprotein, opsin, covalently linked to cis-retinal. May increase spectral sensitivity in dim light. The protein is Medium-wave-sensitive opsin 1 (OPN1MW) of Cavia porcellus (Guinea pig).